A 141-amino-acid polypeptide reads, in one-letter code: Protein archease (141 aa).

The Ca(2+) site is built by aspartate 19 and aspartate 140.

Belongs to the archease family.

Activates the tRNA-splicing ligase complex by facilitating the enzymatic turnover of catalytic subunit RtcB. Acts by promoting the guanylylation of RtcB, a key intermediate step in tRNA ligation. Can also alter the NTP specificity of RtcB such that ATP, dGTP or ITP is used efficiently. The protein is Protein archease of Thermoplasma acidophilum (strain ATCC 25905 / DSM 1728 / JCM 9062 / NBRC 15155 / AMRC-C165).